A 244-amino-acid chain; its full sequence is tRNA (guanine-N(1)-)-methyltransferase (244 aa).

Residues G113 and I133–L138 each bind S-adenosyl-L-methionine.

The protein belongs to the RNA methyltransferase TrmD family. Homodimer.

The protein resides in the cytoplasm. The enzyme catalyses guanosine(37) in tRNA + S-adenosyl-L-methionine = N(1)-methylguanosine(37) in tRNA + S-adenosyl-L-homocysteine + H(+). Its function is as follows. Specifically methylates guanosine-37 in various tRNAs. This Bacillus pumilus (strain SAFR-032) protein is tRNA (guanine-N(1)-)-methyltransferase.